The sequence spans 352 residues: C-X-C chemokine receptor type 4 (352 aa).

The interval 1-21 is important for chemokine binding and signaling; that stretch reads MEGISIYTSDNYTEEMGSGDY. Topologically, residues 1–38 are extracellular; that stretch reads MEGISIYTSDNYTEEMGSGDYDSIKEPCFREENAHFNR. Tyrosine 7 is modified (sulfotyrosine). Asparagine 11 carries N-linked (GlcNAc...) asparagine glycosylation. Tyrosine 12 is modified (sulfotyrosine). The O-linked (Xyl...) (chondroitin sulfate) serine glycan is linked to serine 18. Tyrosine 21 is subject to Sulfotyrosine. Disulfide bonds link cysteine 28/cysteine 274 and cysteine 109/cysteine 186. Residues 39 to 63 form a helical membrane-spanning segment; sequence IFLPTIYSIIFLTGIVGNGLVILVM. The Cytoplasmic portion of the chain corresponds to 64–77; it reads GYQKKLRSMTDKYR. A helical transmembrane segment spans residues 78-99; that stretch reads LHLSVADLLFVITLPFWAVDAV. The tract at residues 94–97 is chemokine binding; that stretch reads WAVD. At 100–110 the chain is on the extracellular side; it reads ANWYFGNFLCK. Residues 111–130 traverse the membrane as a helical segment; sequence AVHVIYTVNLYSSVLILAFI. The segment at 113 to 117 is chemokine binding; that stretch reads HVIYT. Residues 131–154 lie on the Cytoplasmic side of the membrane; the sequence is SLDRYLAIVHATNSQKPRKLLAEK. The short motif at 133–135 is the Important for signaling element; that stretch reads DRY. The segment at 135–147 is involved in dimerization; when bound to chemokine; sequence YLAIVHATNSQKP. A helical membrane pass occupies residues 155 to 174; it reads VVYVGVWIPALLLTIPDFIF. Residues 175-195 are Extracellular-facing; the sequence is ASVSEADDRYICDRFYPNDLW. The segment at 186 to 190 is chemokine binding, important for signaling; that stretch reads CDRFY. The segment at 191 to 210 is involved in dimerization; the sequence is PNDLWVVVFQFQHIMVGLIL. A helical transmembrane segment spans residues 196 to 216; that stretch reads VVVFQFQHIMVGLILPGIDIL. Over 217 to 241 the chain is Cytoplasmic; sequence SCYCIIISKLSHSKGHQKRKALKTT. Residues 242–261 form a helical membrane-spanning segment; it reads VILILAFFACWLPYYIGISI. Residues 262–282 lie on the Extracellular side of the membrane; it reads DSFILLEIIKQGCEFENTVHK. An involved in dimerization region spans residues 266–268; sequence LLE. A helical membrane pass occupies residues 283 to 302; that stretch reads WISITEALAFFHCCLNPILY. Residues 303 to 352 are Cytoplasmic-facing; it reads AFLGAKFKTSAQHALTSVSRGSSLKILSKGKRGGHSSVSTESESSSFHSS. Residues serine 319 and serine 321 each carry the phosphoserine modification. Serine 324 and serine 325 each carry phosphoserine; by PKC and GRK6. A disordered region spans residues 329 to 352; sequence LSKGKRGGHSSVSTESESSSFHSS. Phosphoserine; by GRK6 is present on serine 330. A Glycyl lysine isopeptide (Lys-Gly) (interchain with G-Cter in ubiquitin) cross-link involves residue lysine 331. The segment covering 337-352 has biased composition (low complexity); it reads HSSVSTESESSSFHSS. Position 339 is a phosphoserine; by GRK6 (serine 339). Serine 348 and serine 351 each carry phosphoserine.

The protein belongs to the G-protein coupled receptor 1 family. Monomer. Can form homodimers. Interacts with CD164. Interacts with ARRB2; the interaction is dependent on the C-terminal phosphorylation of CXCR4 and allows activation of MAPK1 and MAPK3. Interacts with ARR3; the interaction is dependent on the C-terminal phosphorylation of CXCR4 and modulates calcium mobilization. Interacts with RNF113A; the interaction, enhanced by CXCL12, promotes CXCR4 ubiquitination and subsequent degradation. Interacts (via the cytoplasmic C-terminal) with ITCH (via the WW domains I and II); the interaction, enhanced by CXCL12, promotes CXCR4 ubiquitination and leads to its degradation. Interacts with extracellular ubiquitin. Interacts with DBN1; this interaction is enhanced by antigenic stimulation. Following LPS binding, may form a complex with GDF5, HSP90AA1 and HSPA8. In terms of processing, phosphorylated on agonist stimulation. Rapidly phosphorylated on serine and threonine residues in the C-terminal. Phosphorylation at Ser-324 and Ser-325 leads to recruitment of ITCH, ubiquitination and protein degradation. Ubiquitinated after ligand binding, leading to its degradation. Ubiquitinated by ITCH at the cell membrane on agonist stimulation. The ubiquitin-dependent mechanism, endosomal sorting complex required for transport (ESCRT), then targets CXCR4 for lysosomal degradation. This process is dependent also on prior Ser-/Thr-phosphorylation in the C-terminal of CXCR4. Also binding of ARRB1 to STAM negatively regulates CXCR4 sorting to lysosomes though modulating ubiquitination of SFR5S. Post-translationally, sulfation is required for efficient binding of CXCL12/SDF-1alpha and promotes its dimerization. In terms of processing, O- and N-glycosylated. N-glycosylation can mask coreceptor function. The O-glycosylation chondroitin sulfate attachment does not affect interaction with CXCL12/SDF-1alpha nor its coreceptor activity.

It is found in the cell membrane. The protein resides in the cell junction. The protein localises to the early endosome. Its subcellular location is the late endosome. It localises to the lysosome. Receptor for the C-X-C chemokine CXCL12/SDF-1 that transduces a signal by increasing intracellular calcium ion levels and enhancing MAPK1/MAPK3 activation. Involved in the AKT signaling cascade. Plays a role in regulation of cell migration, e.g. during wound healing. Acts as a receptor for extracellular ubiquitin; leading to enhanced intracellular calcium ions and reduced cellular cAMP levels. Binds bacterial lipopolysaccharide (LPS) et mediates LPS-induced inflammatory response, including TNF secretion by monocytes. Involved in hematopoiesis and in cardiac ventricular septum formation. Also plays an essential role in vascularization of the gastrointestinal tract, probably by regulating vascular branching and/or remodeling processes in endothelial cells. Involved in cerebellar development. In the CNS, could mediate hippocampal-neuron survival. This is C-X-C chemokine receptor type 4 (CXCR4) from Macaca mulatta (Rhesus macaque).